Consider the following 676-residue polypeptide: Long-chain-fatty-acid--CoA ligase 1 (676 aa).

246–257 (YTSGSTGLPKGV) provides a ligand contact to ATP. Residues 511 to 560 (DGWFRTGDVGELTPEGLLRIIDRKKNLVKTQNGEYIALEKLESRYRTSSL) carry the FACS motif.

It belongs to the ATP-dependent AMP-binding enzyme family. Requires Mg(2+) as cofactor.

The enzyme catalyses a long-chain fatty acid + ATP + CoA = a long-chain fatty acyl-CoA + AMP + diphosphate. Functionally, esterification, concomitant with transport, of exogenous long-chain fatty acids into metabolically active CoA thioesters for subsequent degradation or incorporation into phospholipids. It may supplement intracellular myristoyl-CoA pools from exogenous myristate. Preferentially acts on C12:0-C16:0 fatty acids with myristic and pentadecanic acid (C15:0) having the highest activities. Appears to play a role in the maintenance of cell viability during stationary phase. This is Long-chain-fatty-acid--CoA ligase 1 (lcf1) from Schizosaccharomyces pombe (strain 972 / ATCC 24843) (Fission yeast).